A 328-amino-acid chain; its full sequence is Acetyl-coenzyme A carboxylase carboxyl transferase subunit alpha (328 aa).

The 255-residue stretch at 42 to 296 folds into the CoA carboxyltransferase C-terminal domain; the sequence is SFKEQLSILK…KESLISELHF (255 aa).

This sequence belongs to the AccA family. Acetyl-CoA carboxylase is a heterohexamer composed of biotin carboxyl carrier protein (accB), biotin carboxylase (accC) and two subunits each of ACCase subunit alpha (accA) and ACCase subunit beta (accD).

The protein resides in the plastid. Its subcellular location is the chloroplast. The enzyme catalyses N(6)-carboxybiotinyl-L-lysyl-[protein] + acetyl-CoA = N(6)-biotinyl-L-lysyl-[protein] + malonyl-CoA. It participates in lipid metabolism; malonyl-CoA biosynthesis; malonyl-CoA from acetyl-CoA: step 1/1. In terms of biological role, component of the acetyl coenzyme A carboxylase (ACC) complex. First, biotin carboxylase catalyzes the carboxylation of biotin on its carrier protein (BCCP) and then the CO(2) group is transferred by the carboxyltransferase to acetyl-CoA to form malonyl-CoA. In Gracilaria tenuistipitata var. liui (Red alga), this protein is Acetyl-coenzyme A carboxylase carboxyl transferase subunit alpha.